The chain runs to 119 residues: uncharacterized protein (119 aa).

C13 is an active-site residue.

This sequence belongs to the ArsC family.

This is an uncharacterized protein from Escherichia coli (strain K12).